We begin with the raw amino-acid sequence, 161 residues long: Transcription elongation factor GreA (161 aa).

Residues 45–72 (NAEYHSAKEKLKLIDIQIAELNAVISKA) adopt a coiled-coil conformation.

The protein belongs to the GreA/GreB family.

Necessary for efficient RNA polymerase transcription elongation past template-encoded arresting sites. The arresting sites in DNA have the property of trapping a certain fraction of elongating RNA polymerases that pass through, resulting in locked ternary complexes. Cleavage of the nascent transcript by cleavage factors such as GreA or GreB allows the resumption of elongation from the new 3'terminus. GreA releases sequences of 2 to 3 nucleotides. The chain is Transcription elongation factor GreA from Aliarcobacter butzleri (strain RM4018) (Arcobacter butzleri).